The primary structure comprises 516 residues: Melianol synthase CYP71BQ17 (516 aa).

Residues 14–34 (MPHLPSLPVSLSFLLFFLMLV) form a helical membrane-spanning segment. C454 provides a ligand contact to heme.

It belongs to the cytochrome P450 family. Heme is required as a cofactor. Mainly expressed in roots and, to a lesser extent, in stems and old leaves.

The protein localises to the membrane. The catalysed reaction is dihydroniloticin + 2 reduced [NADPH--hemoprotein reductase] + 2 O2 = melianol + 2 oxidized [NADPH--hemoprotein reductase] + 3 H2O + 2 H(+). Its pathway is secondary metabolite biosynthesis; terpenoid biosynthesis. Monooxygenase involved in the biosynthesis of quassinoids triterpene natural products such as ailanthone, chaparrinone, glaucarubinone and amarolide, allelopathic degraded triterpene lactones inhibiting the growth of other plants, and possessing antimalarial, antifeedant, insecticidal, anti-inflammatory and anticancer activities. Catalyzes the conversion of dihydroniloticin to the protolimonoid melianol. The chain is Melianol synthase CYP71BQ17 from Ailanthus altissima (Tree-of-heaven).